The following is a 327-amino-acid chain: Zinc transport protein ZntB (327 aa).

Residues 1–273 are Cytoplasmic-facing; the sequence is MEAIKGSDVN…ARRTYTMSLM (273 aa). Residues 274–294 form a helical membrane-spanning segment; it reads AMVFLPSTFLTGLFGVNLGGI. Topologically, residues 295–300 are periplasmic; the sequence is PGGGWR. Residues 301 to 321 traverse the membrane as a helical segment; the sequence is FGFSLFCILLVVLIGGVTLWL. Over 322–327 the chain is Cytoplasmic; it reads HRSKWL.

This sequence belongs to the CorA metal ion transporter (MIT) (TC 1.A.35) family.

It is found in the cell inner membrane. It catalyses the reaction Zn(2+)(out) + H(+)(out) = Zn(2+)(in) + H(+)(in). Functionally, zinc transporter. Acts as a Zn(2+):proton symporter, which likely mediates zinc ion uptake. In Salmonella enteritidis PT4 (strain P125109), this protein is Zinc transport protein ZntB.